Reading from the N-terminus, the 485-residue chain is NADH-quinone oxidoreductase subunit N (485 aa).

14 helical membrane-spanning segments follow: residues 8 to 28, 35 to 55, 71 to 91, 105 to 125, 127 to 147, 159 to 179, 203 to 223, 235 to 255, 271 to 291, 297 to 317, 326 to 346, 373 to 393, 408 to 430, and 455 to 475; these read LIAL…MLSI, FLNA…LWFV, GFAM…CTFA, FYLL…ANHL, ALFL…GYAF, YTIL…LVYA, LLAG…LVPF, PAPV…GVVM, VVLG…ALSQ, LLGY…IALQ, VGVY…VVSL, AAVM…LGFI, WWLV…RVAV, and IVVL…QPLI.

This sequence belongs to the complex I subunit 2 family. NDH-1 is composed of 13 different subunits. Subunits NuoA, H, J, K, L, M, N constitute the membrane sector of the complex.

It is found in the cell inner membrane. The enzyme catalyses a quinone + NADH + 5 H(+)(in) = a quinol + NAD(+) + 4 H(+)(out). Functionally, NDH-1 shuttles electrons from NADH, via FMN and iron-sulfur (Fe-S) centers, to quinones in the respiratory chain. The immediate electron acceptor for the enzyme in this species is believed to be ubiquinone. Couples the redox reaction to proton translocation (for every two electrons transferred, four hydrogen ions are translocated across the cytoplasmic membrane), and thus conserves the redox energy in a proton gradient. This is NADH-quinone oxidoreductase subunit N from Salmonella schwarzengrund (strain CVM19633).